The sequence spans 133 residues: Ribosome-binding factor A (133 aa).

The protein belongs to the RbfA family. Monomer. Binds 30S ribosomal subunits, but not 50S ribosomal subunits or 70S ribosomes.

The protein localises to the cytoplasm. One of several proteins that assist in the late maturation steps of the functional core of the 30S ribosomal subunit. Associates with free 30S ribosomal subunits (but not with 30S subunits that are part of 70S ribosomes or polysomes). Required for efficient processing of 16S rRNA. May interact with the 5'-terminal helix region of 16S rRNA. This chain is Ribosome-binding factor A, found in Salmonella typhimurium (strain LT2 / SGSC1412 / ATCC 700720).